The following is a 611-amino-acid chain: Inhibitor of apoptosis protein (611 aa).

BIR repeat units follow at residues 30 to 97 (ELYR…CSFV), 176 to 242 (EEAR…CPFV), and 262 to 329 (HEAR…CEYL). The Zn(2+) site is built by Cys-299, Cys-302, His-319, and Cys-326. Positions 446 to 536 (VASDDLSLIR…VLYKDLFVEK (91 aa)) constitute a CARD domain. The RING-type zinc-finger motif lies at 564 to 599 (CKVCMDKEVSIVFIPCGHLVVCKECAPSLRKCPICR).

Belongs to the IAP family. As to expression, cells of the T-lymphocyte lineage. Found in both cortical and medullary cells of the thymus. Expressed at relatively high levels also in spleen, bursa, intestine and lung and at very low levels in testis, brain and skeletal muscle.

Its subcellular location is the nucleus. The protein localises to the cytoplasm. Apoptotic suppressor. The protein is Inhibitor of apoptosis protein (ITA) of Gallus gallus (Chicken).